Here is a 188-residue protein sequence, read N- to C-terminus: uncharacterized protein (188 aa).

This is an uncharacterized protein from Acidianus convivator (ABV).